We begin with the raw amino-acid sequence, 255 residues long: Type III pantothenate kinase (255 aa).

6 to 13 (DIGNTNIV) contributes to the ATP binding site. 107–110 (GSDC) contacts substrate. D109 (proton acceptor) is an active-site residue. D129 lines the K(+) pocket. T132 contacts ATP. Residue T184 coordinates substrate.

It belongs to the type III pantothenate kinase family. Homodimer. Requires NH4(+) as cofactor. It depends on K(+) as a cofactor.

It localises to the cytoplasm. It carries out the reaction (R)-pantothenate + ATP = (R)-4'-phosphopantothenate + ADP + H(+). It functions in the pathway cofactor biosynthesis; coenzyme A biosynthesis; CoA from (R)-pantothenate: step 1/5. Functionally, catalyzes the phosphorylation of pantothenate (Pan), the first step in CoA biosynthesis. This is Type III pantothenate kinase from Bifidobacterium longum subsp. infantis (strain ATCC 15697 / DSM 20088 / JCM 1222 / NCTC 11817 / S12).